The chain runs to 393 residues: Phosphoglycerate kinase (393 aa).

Substrate contacts are provided by residues 21 to 23 (DLN), Arg-36, 59 to 62 (HLGR), Arg-113, and Arg-146. Residues Lys-197, Glu-319, and 345–348 (GGDT) contribute to the ATP site.

This sequence belongs to the phosphoglycerate kinase family. As to quaternary structure, monomer.

It is found in the cytoplasm. It catalyses the reaction (2R)-3-phosphoglycerate + ATP = (2R)-3-phospho-glyceroyl phosphate + ADP. Its pathway is carbohydrate degradation; glycolysis; pyruvate from D-glyceraldehyde 3-phosphate: step 2/5. In Nitratidesulfovibrio vulgaris (strain DP4) (Desulfovibrio vulgaris), this protein is Phosphoglycerate kinase.